The sequence spans 250 residues: MADS-box protein J2 (250 aa).

One can recognise an MADS-box domain in the interval 1-61 (MGRGRVELKR…GKLYEFSSAS (61 aa)). Positions 87–177 (TQMNYNEYVR…KNKLEESAAR (91 aa)) constitute a K-box domain.

It is found in the nucleus. Functionally, MADS-box transcription factor that acts redundantly with EJ2 to control meristem maturation and inflorescence architecture. The polypeptide is MADS-box protein J2 (Solanum lycopersicum (Tomato)).